A 122-amino-acid chain; its full sequence is Large ribosomal subunit protein uL14 (122 aa).

This sequence belongs to the universal ribosomal protein uL14 family. Part of the 50S ribosomal subunit. Forms a cluster with proteins L3 and L19. In the 70S ribosome, L14 and L19 interact and together make contacts with the 16S rRNA in bridges B5 and B8.

Binds to 23S rRNA. Forms part of two intersubunit bridges in the 70S ribosome. In Chlorobium phaeovibrioides (strain DSM 265 / 1930) (Prosthecochloris vibrioformis (strain DSM 265)), this protein is Large ribosomal subunit protein uL14.